The following is a 310-amino-acid chain: Haloalkane dehalogenase (310 aa).

Positions 49–295 (VFLCLHGEPT…DAGHFVQEFG (247 aa)) constitute an AB hydrolase-1 domain. The active-site Nucleophile is the Asp124. Residues Trp125 and Trp175 each coordinate chloride. The active-site Proton donor is the Asp260. The active-site Proton acceptor is His289.

This sequence belongs to the haloalkane dehalogenase family. Type 1 subfamily. As to quaternary structure, monomer.

The enzyme catalyses 1-haloalkane + H2O = a halide anion + a primary alcohol + H(+). The catalysed reaction is 1,2-dichloroethane + H2O = 2-chloroethanol + chloride + H(+). Its pathway is xenobiotic degradation; 1,2-dichloroethane degradation; glycolate from 1,2-dichloroethane: step 1/4. Its activity is regulated as follows. Inhibited by thiol reagents such as p-chloromercuribenzoate and iodoacetamide. Catalyzes hydrolytic cleavage of carbon-halogen bonds in halogenated aliphatic compounds, leading to the formation of the corresponding primary alcohols, halide ions and protons. Has a broad substrate specificity, which includes terminally mono- and di- chlorinated and brominated alkanes (up to C4 only). The highest activity was found with 1,2-dichloroethane, 1,3-dichloropropane, and 1,2-dibromoethane. In Xanthobacter autotrophicus, this protein is Haloalkane dehalogenase (dhlA).